The sequence spans 252 residues: 2-succinyl-6-hydroxy-2,4-cyclohexadiene-1-carboxylate synthase (252 aa).

Belongs to the AB hydrolase superfamily. MenH family. Monomer.

The catalysed reaction is 5-enolpyruvoyl-6-hydroxy-2-succinyl-cyclohex-3-ene-1-carboxylate = (1R,6R)-6-hydroxy-2-succinyl-cyclohexa-2,4-diene-1-carboxylate + pyruvate. Its pathway is quinol/quinone metabolism; 1,4-dihydroxy-2-naphthoate biosynthesis; 1,4-dihydroxy-2-naphthoate from chorismate: step 3/7. It functions in the pathway quinol/quinone metabolism; menaquinone biosynthesis. Catalyzes a proton abstraction reaction that results in 2,5-elimination of pyruvate from 2-succinyl-5-enolpyruvyl-6-hydroxy-3-cyclohexene-1-carboxylate (SEPHCHC) and the formation of 2-succinyl-6-hydroxy-2,4-cyclohexadiene-1-carboxylate (SHCHC). This is 2-succinyl-6-hydroxy-2,4-cyclohexadiene-1-carboxylate synthase from Escherichia coli (strain SE11).